The sequence spans 818 residues: uncharacterized protein (818 aa).

Composition is skewed to low complexity over residues 1–33, 44–68, and 97–150; these read MYNN…NYIS, NNFL…PQQQ, and NNSN…TKSN. Disordered regions lie at residues 1 to 68, 92 to 150, 164 to 220, 284 to 306, and 415 to 445; these read MYNN…PQQQ, LNTG…TKSN, KLDN…KYHE, NMNG…NNSD, and NINK…NNNN. 2 stretches are compositionally biased toward acidic residues: residues 172 to 190 and 205 to 214; these read SEEE…EEKE and DNNSQDEDKE. Low complexity predominate over residues 284–302; the sequence is NMNGSSDSSDSSNSSGHSR. A helical membrane pass occupies residues 534–554; that stretch reads IIAIIVIVWPLIANLTYKFIV. The interval 779-808 is disordered; the sequence is ANNFMSDSNRSPSSSSSSSSSTSDSENGML. The span at 784–803 shows a compositional bias: low complexity; sequence SDSNRSPSSSSSSSSSTSDS.

The protein localises to the membrane. This is an uncharacterized protein from Dictyostelium discoideum (Social amoeba).